The following is a 158-amino-acid chain: Large ribosomal subunit protein uL16 (158 aa).

Residues 1–22 (MLSPKRTKYRKQQRGRMKGKAT) are disordered.

Belongs to the universal ribosomal protein uL16 family. In terms of assembly, part of the 50S ribosomal subunit.

Binds 23S rRNA and is also seen to make contacts with the A and possibly P site tRNAs. The protein is Large ribosomal subunit protein uL16 of Synechococcus sp. (strain JA-3-3Ab) (Cyanobacteria bacterium Yellowstone A-Prime).